Consider the following 301-residue polypeptide: Ribosomal protein L11 methyltransferase (301 aa).

S-adenosyl-L-methionine is bound by residues Thr-146, Gly-167, Asp-189, and Asn-237.

This sequence belongs to the methyltransferase superfamily. PrmA family.

It is found in the cytoplasm. It catalyses the reaction L-lysyl-[protein] + 3 S-adenosyl-L-methionine = N(6),N(6),N(6)-trimethyl-L-lysyl-[protein] + 3 S-adenosyl-L-homocysteine + 3 H(+). Its function is as follows. Methylates ribosomal protein L11. This chain is Ribosomal protein L11 methyltransferase, found in Prochlorococcus marinus (strain MIT 9313).